Reading from the N-terminus, the 589-residue chain is Guanylate-binding protein 2 (589 aa).

Residues 1-309 (MASEIHMSEP…GAISNGSLPC (309 aa)) form a GTPase domain (Globular) region. Residues 35 to 276 (TQPVVVVAIV…FTSYILSYSS (242 aa)) form the GB1/RHD3-type G domain. Residues 45-52 (GLYRTGKS), 181-182 (RD), and L245 contribute to the GTP site. C586 carries the post-translational modification Cysteine methyl ester. C586 carries S-geranylgeranyl cysteine lipidation. Positions 587 to 589 (TIL) are cleaved as a propeptide — removed in mature form.

It belongs to the TRAFAC class dynamin-like GTPase superfamily. GB1/RHD3 GTPase family. GB1 subfamily. As to quaternary structure, homodimer; homodimerization occurs upon GTP-binding and is required for the association with membranous structures. Heterodimer with other family members, including GBP1, GBP3, GBP4 and GBP5. Isoprenylation is required for proper subcellular location.

The protein localises to the cytoplasmic vesicle membrane. It localises to the golgi apparatus membrane. Its subcellular location is the cytoplasm. It is found in the perinuclear region. It catalyses the reaction GTP + H2O = GDP + phosphate + H(+). Functionally, interferon (IFN)-inducible GTPase that plays important roles in innate immunity against a diverse range of bacterial, viral and protozoan pathogens. Hydrolyzes GTP to GMP in 2 consecutive cleavage reactions, but the major reaction product is GDP. Following infection, recruited to the pathogen-containing vacuoles or vacuole-escaped bacteria and acts as a positive regulator of inflammasome assembly by promoting the release of inflammasome ligands from bacteria. Acts by promoting lysis of pathogen-containing vacuoles, releasing pathogens into the cytosol. Following pathogen release in the cytosol, promotes recruitment of proteins that mediate bacterial cytolysis, such as Gm12250/Irgb10: this liberates ligands that are detected by inflammasomes, such as lipopolysaccharide (LPS) that activates the non-canonical CASP4/CASP11 inflammasome or double-stranded DNA (dsDNA) that activates the AIM2 inflammasome. Confers protection to the protozoan pathogen Toxoplasma gondii. Independently of its GTPase activity, acts as an inhibitor of various viruses infectivity by inhibiting FURIN-mediated maturation of viral envelope proteins. The chain is Guanylate-binding protein 2 from Mus musculus (Mouse).